Reading from the N-terminus, the 507-residue chain is Secreted lipase ARB_01498 (507 aa).

An N-terminal signal peptide occupies residues 1–21 (MFVQLLTYGLVAASTLQGVFA). Ser196 (acyl-ester intermediate) is an active-site residue. N-linked (GlcNAc...) asparagine glycosylation is found at Asn262, Asn321, Asn358, and Asn416.

The protein belongs to the type-B carboxylesterase/lipase family.

It localises to the secreted. The enzyme catalyses a triacylglycerol + H2O = a diacylglycerol + a fatty acid + H(+). This chain is Secreted lipase ARB_01498, found in Arthroderma benhamiae (strain ATCC MYA-4681 / CBS 112371) (Trichophyton mentagrophytes).